The following is a 246-amino-acid chain: Probable S-methyl-5'-thioinosine phosphorylase (246 aa).

Phosphate contacts are provided by residues Thr-10 and 52–53 (RH). Substrate is bound at residue Met-185. Phosphate is bound at residue Thr-186. Substrate is bound at residue 209-211 (NPA).

It belongs to the PNP/MTAP phosphorylase family. MTAP subfamily. As to quaternary structure, homotrimer.

The catalysed reaction is S-methyl-5'-thioinosine + phosphate = 5-(methylsulfanyl)-alpha-D-ribose 1-phosphate + hypoxanthine. It participates in purine metabolism; purine nucleoside salvage. In terms of biological role, catalyzes the reversible phosphorylation of S-methyl-5'-thioinosine (MTI) to hypoxanthine and 5-methylthioribose-1-phosphate. Involved in the breakdown of S-methyl-5'-thioadenosine (MTA), a major by-product of polyamine biosynthesis. Catabolism of (MTA) occurs via deamination to MTI and phosphorolysis to hypoxanthine. The polypeptide is Probable S-methyl-5'-thioinosine phosphorylase (Pseudomonas syringae pv. tomato (strain ATCC BAA-871 / DC3000)).